The sequence spans 43 residues: Protein PsbN (43 aa).

A helical membrane pass occupies residues 4 to 24 (ATIIVIFVSSLLVGITAYSVY).

It belongs to the PsbN family.

The protein localises to the plastid. The protein resides in the chloroplast thylakoid membrane. Functionally, may play a role in photosystem I and II biogenesis. The sequence is that of Protein PsbN from Thalassiosira pseudonana (Marine diatom).